Here is a 138-residue protein sequence, read N- to C-terminus: Photosystem II extrinsic protein U (138 aa).

The signal sequence occupies residues 1-28 (MSRVVSALMGLVLMFGCAFFSVQPQAQA). Positions 29–42 (LDLSNGFVSAAVLG) are excised as a propeptide.

The protein belongs to the PsbU family. PSII is composed of 1 copy each of membrane proteins PsbA, PsbB, PsbC, PsbD, PsbE, PsbF, PsbH, PsbI, PsbJ, PsbK, PsbL, PsbM, PsbT, PsbX, PsbY, PsbZ, Psb30/Ycf12, peripheral proteins PsbO, CyanoQ (PsbQ), PsbU, PsbV and a large number of cofactors. It forms dimeric complexes.

The protein resides in the cellular thylakoid membrane. Functionally, one of the extrinsic, lumenal subunits of photosystem II (PSII). PSII is a light-driven water plastoquinone oxidoreductase, using light energy to abstract electrons from H(2)O, generating a proton gradient subsequently used for ATP formation. The extrinsic proteins stabilize the structure of photosystem II oxygen-evolving complex (OEC), the ion environment of oxygen evolution and protect the OEC against heat-induced inactivation. The polypeptide is Photosystem II extrinsic protein U (Picosynechococcus sp. (strain ATCC 27264 / PCC 7002 / PR-6) (Agmenellum quadruplicatum)).